A 562-amino-acid polypeptide reads, in one-letter code: Cytochrome c oxidase subunit 1 (562 aa).

A helical transmembrane segment spans residues 21-41; it reads TLYFLVLGFLALIVGSLFGPF. His72 serves as a coordination point for Fe(II)-heme a. The next 8 membrane-spanning stretches (helical) occupy residues 74–94, 105–125, 144–164, 187–207, 227–247, 267–287, 300–320, and 345–365; these read VLNA…YLPA, LMWL…LPLL, AFYL…YIVL, VVFW…AVLF, LFWW…YAII, LAFL…QFAD, VLTL…AASL, and AFVA…GGIV. 4 residues coordinate Cu cation: His233, Tyr237, His282, and His283. The 1'-histidyl-3'-tyrosine (His-Tyr) cross-link spans 233-237; it reads HPIVY. His384 contributes to the heme a3 binding site. Transmembrane regions (helical) follow at residues 385–405, 420–440, 471–491, and 527–547; these read FHLQ…YWLL, LGLA…VGLH, VLAG…LFSV, and IGFW…PTLV. His386 is a Fe(II)-heme a binding site.

The protein belongs to the heme-copper respiratory oxidase family. The cofactor is heme. Requires Cu cation as cofactor.

It is found in the cell membrane. The catalysed reaction is 4 Fe(II)-[cytochrome c] + O2 + 8 H(+)(in) = 4 Fe(III)-[cytochrome c] + 2 H2O + 4 H(+)(out). Its pathway is energy metabolism; oxidative phosphorylation. In Thermus thermophilus (strain ATCC 27634 / DSM 579 / HB8), this protein is Cytochrome c oxidase subunit 1 (cbaA).